The chain runs to 557 residues: MSDPEMGWVPEPPAMTLGASRVELRVSCHGLLDRDTLTKPHPCVLLKLYSDEQWVEVERTEVLRSCSSPVFSRVLAIEYFFEEKQPLQFHVFDAEDGATSPSSDTFLGSTECTLGQIVSQTKVTKPLLLKNGKTAGKSTITIVAEEVSGTNDYVQLTFRAHKLDNKDLFSKSDPFMEIYKTNGDQSDQLVWRTEVVKNNLNPSWEPFRLSLHSLCSCDIHRPLKFLVYDYDSSGKHDFIGEFTSTFQEMQEGTANPGQEMQWDCINPKYRDKKKNYKSSGTVVLAQCTVEKVHTFLDYIMGGCQISFTVAIDFTASNGDPRSSQSLHCLSPRQPNHYLQALRTVGGICQDYDSDKRFPAFGFGARIPPNFEVSHDFAINFDPENPECEEISGVIASYRRCLPQIQLYGPTNVAPIINRVAEPAQREQSTGQATKYSVLLVLTDGVVSDMAETRTAIVRASRLPMSIIIVGVGNADFSDMRLLDGDDGPLRCPKGVPAARDIVQFVPFRDFKDAAPSALAKCVLAEVPRQVVEYYASQGISPGAPRPSTPAMTPSPSP.

C2 domains follow at residues 1-127 (MSDP…TKPL) and 134-263 (TAGK…MQWD). Ca(2+) is bound by residues Asp167, Asp173, Asp229, Asp231, and Asp237. The tract at residues 244–303 (STFQEMQEGTANPGQEMQWDCINPKYRDKKKNYKSSGTVVLAQCTVEKVHTFLDYIMGGC) is linker region. Residues 306-526 (SFTVAIDFTA…ALAKCVLAEV (221 aa)) form the VWFA domain.

It belongs to the copine family. Interacts (via second C2 domain) with OS9 (via C-terminus); this interaction occurs in a calcium-dependent manner in vitro. May interact with NECAB1. It depends on Ca(2+) as a cofactor. In terms of tissue distribution, expressed in the brain. Expressed in pyramidal cells, granule cells, and neurons in the dentate gyrus of the hippocampus and in granule cells of the olfactory bulb (at protein level). Expressed in pyramidal cells of the CA1-CA3 regions, in granule cells of the dentate gyrus, in granule cells of the olfactory bulbs, in the mitral cell layer and in neurons of the cerebral cortex layer II, brainstem and spinal cord. Not detected in glial cells.

The protein resides in the cytoplasm. Its subcellular location is the cell membrane. It localises to the endosome. The protein localises to the cytoplasmic vesicle. It is found in the clathrin-coated vesicle. The protein resides in the perikaryon. Its subcellular location is the cell projection. It localises to the dendrite. Its function is as follows. Calcium-dependent phospholipid-binding protein that plays a role in calcium-mediated intracellular processes. Binds phospholipid membranes in a calcium-dependent manner. Plays a role in dendrite formation by melanocytes. This Mus musculus (Mouse) protein is Copine-6.